We begin with the raw amino-acid sequence, 323 residues long: Probable cell division protein WhiA (323 aa).

Positions 275 to 309 (TLKELGEMLTTGQVSKSGINHRLRKLDQIAERLRS) form a DNA-binding region, H-T-H motif.

The protein belongs to the WhiA family.

In terms of biological role, involved in cell division and chromosome segregation. This is Probable cell division protein WhiA from Listeria monocytogenes serotype 4a (strain HCC23).